Reading from the N-terminus, the 236-residue chain is 7-cyano-7-deazaguanine synthase (236 aa).

Position 7–17 (7–17 (CSGGLDSVSLA)) interacts with ATP. 4 residues coordinate Zn(2+): Cys185, Cys193, Cys196, and Cys199.

It belongs to the QueC family. Requires Zn(2+) as cofactor.

The enzyme catalyses 7-carboxy-7-deazaguanine + NH4(+) + ATP = 7-cyano-7-deazaguanine + ADP + phosphate + H2O + H(+). Its pathway is purine metabolism; 7-cyano-7-deazaguanine biosynthesis. Functionally, catalyzes the ATP-dependent conversion of 7-carboxy-7-deazaguanine (CDG) to 7-cyano-7-deazaguanine (preQ(0)). In Rhizobium etli (strain ATCC 51251 / DSM 11541 / JCM 21823 / NBRC 15573 / CFN 42), this protein is 7-cyano-7-deazaguanine synthase.